The chain runs to 21 residues: Venom peptide Tv1 (21 aa).

3 disulfides stabilise this stretch: cysteine 4–cysteine 20, cysteine 5–cysteine 21, and cysteine 7–cysteine 16.

As to expression, expressed by the salivary gland. This peptide is considered as a venom peptide.

It localises to the secreted. In terms of biological role, injections of 20 uM of this synthetic peptide (Ile) causes partial paralysis to polychaete worms (Nereis virens), the natural prey of terebrid snails. This paralysis may be due to an inhibition of nicotinic receptors at the neuromuscular junction. This chain is Venom peptide Tv1, found in Terebra variegata (Variegate auger snail).